Consider the following 688-residue polypeptide: Ethylmalonyl-CoA mutase (688 aa).

One can recognise a B12-binding domain in the interval Thr530–Ala659. His543 contacts adenosylcob(III)alamin. The disordered stretch occupies residues Asp666–Phe688.

It belongs to the methylmalonyl-CoA mutase family. Adenosylcob(III)alamin is required as a cofactor.

The enzyme catalyses (2R)-ethylmalonyl-CoA = (2S)-methylsuccinyl-CoA. Radical enzyme that catalyzes the transformation of (2R)-ethylmalonyl-CoA to (2S)-methylsuccinyl-CoA. Is involved in the ethylmalonyl-CoA pathway for acetyl-CoA assimilation required for M.extorquens growth on one- and two-carbon compounds such as ethylamine, methanol or ethanol as sole carbon source. This enzyme acts as a regulatory metabolic control point in this pathway, that allows M.extorquens to efficiently restore metabolic balance when challenged with a sudden change in the growth substrate. In Methylorubrum extorquens (strain ATCC 14718 / DSM 1338 / JCM 2805 / NCIMB 9133 / AM1) (Methylobacterium extorquens), this protein is Ethylmalonyl-CoA mutase.